The following is a 353-amino-acid chain: Phosphate acyltransferase (353 aa).

Belongs to the PlsX family. As to quaternary structure, homodimer. Probably interacts with PlsY.

The protein resides in the cytoplasm. It catalyses the reaction a fatty acyl-[ACP] + phosphate = an acyl phosphate + holo-[ACP]. Its pathway is lipid metabolism; phospholipid metabolism. Its function is as follows. Catalyzes the reversible formation of acyl-phosphate (acyl-PO(4)) from acyl-[acyl-carrier-protein] (acyl-ACP). This enzyme utilizes acyl-ACP as fatty acyl donor, but not acyl-CoA. The protein is Phosphate acyltransferase of Agrobacterium fabrum (strain C58 / ATCC 33970) (Agrobacterium tumefaciens (strain C58)).